Here is a 793-residue protein sequence, read N- to C-terminus: ABC transporter G family member 1 (793 aa).

Residues 1-20 (MDSNNNNNNENEAFSGASES) show a composition bias toward low complexity. The interval 1–96 (MDSNNNNNNE…NNNQNNNIIN (96 aa)) is disordered. A compositionally biased stretch (basic and acidic residues) spans 21–37 (SEFRKIVEENENEREFE). Over residues 59 to 68 (ETINPNISLD) the composition is skewed to polar residues. Residues 67–102 (LDNNNNNNQNNQNNQNNNNNNNNQNNNIINNLNKKN) adopt a coiled-coil conformation. A compositionally biased stretch (low complexity) spans 69–96 (NNNNNNQNNQNNQNNNNNNNNQNNNIIN). In terms of domain architecture, ABC transporter spans 123–364 (VQITEKGKKK…FNANGYHCSE (242 aa)). 156 to 163 (GPSGAGKT) is an ATP binding site. A compositionally biased stretch (acidic residues) spans 382–398 (DQADSDDDDYNDEEEEI). The segment at 382–457 (DQADSDDDDY…QSTDGRARRR (76 aa)) is disordered. Residues 399–413 (GGGGGGSGGGAGGIE) are compositionally biased toward gly residues. Residues 421–437 (PTMNGSAVDNIKNNELK) are compositionally biased toward polar residues. The span at 438-448 (QQQQQQQQQQQ) shows a compositional bias: low complexity. The ABC transmembrane type-2 domain maps to 527 to 785 (MAFKVNLIQA…VLTFLVLKLK (259 aa)). Helical transmembrane passes span 533 to 553 (LIQA…LGLG), 563 to 583 (VVAF…IHVF), 610 to 630 (FMDA…VYWM), 647 to 667 (FVLM…LISS), 674 to 694 (VGTA…GFFI), 701 to 721 (GWLV…AAVI), and 764 to 784 (VWIL…VLKL).

The protein belongs to the ABC transporter superfamily. ABCG family.

Its subcellular location is the membrane. The chain is ABC transporter G family member 1 (abcG1) from Dictyostelium discoideum (Social amoeba).